A 190-amino-acid chain; its full sequence is Transmembrane protein 11, mitochondrial (190 aa).

2 consecutive transmembrane segments (helical) span residues 84–100 and 107–124; these read VLAG…LPLD and LPAG…GISW.

The protein belongs to the TMEM11 family. In terms of assembly, associates with the mitochondrial contact site and cristae organizing system (MICOS) complex, composed of at least MICOS10/MIC10, CHCHD3/MIC19, CHCHD6/MIC25, APOOL/MIC27, IMMT/MIC60, APOO/MIC23/MIC26 and QIL1/MIC13. This complex was also known under the names MINOS or MitOS complex. The MICOS complex associates with mitochondrial outer membrane proteins SAMM50, MTX1, MTX2 and DNAJC11, mitochondrial inner membrane protein TMEM11 and with HSPA9. Interacts with IMMT/MIC60.

Its subcellular location is the mitochondrion inner membrane. In terms of biological role, plays a role in mitochondrial morphogenesis. The polypeptide is Transmembrane protein 11, mitochondrial (Tmem11) (Mus musculus (Mouse)).